Reading from the N-terminus, the 482-residue chain is Docking protein 1 (482 aa).

N-acetylmethionine is present on M1. Positions 4-119 (AVMEGPLFLQ…WVQTLCRTAF (116 aa)) constitute a PH domain. At S48 the chain carries Phosphoserine. The IRS-type PTB domain maps to 151–259 (EGSQFWVTSQ…QQQKAQGKVG (109 aa)). 2 positions are modified to phosphoserine: S269 and S290. The disordered stretch occupies residues 269-328 (SHDGETEGKTVPPPVPQDPLGSPPALYAEPLDSLRIPPGPSQDSVYSDPLGSTPAGAGEG). Phosphotyrosine is present on residues Y295, Y336, Y340, Y361, and Y376. Positions 353 to 373 (TDSKEDPIYDEPEGLAPAPPR) are disordered. Residue Y397 is modified to Phosphotyrosine; by INSR. Positions 398–482 (ELPYNPATDD…RAGVKSEGST (85 aa)) are disordered. Position 408 is a phosphotyrosine (Y408). The span at 410–423 (VPPPRSPKPAPAPK) shows a compositional bias: pro residues. Position 415 is a phosphoserine (S415). The segment covering 432 to 459 (SGTTRGSGSKGFSSDTALYSQVQKSGTS) has biased composition (polar residues). Phosphotyrosine is present on Y450.

The protein belongs to the DOK family. Type A subfamily. As to quaternary structure, interacts with RasGAP, INPP5D/SHIP1 and ABL1. Interacts directly with phosphorylated ITGB3. Interacts with SRMS (via the SH2 and SH3 domains). In terms of processing, constitutively tyrosine-phosphorylated. Phosphorylated by TEC. Phosphorylated on tyrosine residues by the insulin receptor kinase. Results in the negative regulation of the insulin signaling pathway. Phosphorylated by LYN. Phosphorylated on tyrosine residues by SRMS. In terms of tissue distribution, expressed in lung, spleen, skeletal muscle and kidney.

It is found in the cytoplasm. Its subcellular location is the nucleus. Its function is as follows. DOK proteins are enzymatically inert adaptor or scaffolding proteins. They provide a docking platform for the assembly of multimolecular signaling complexes. DOK1 appears to be a negative regulator of the insulin signaling pathway. Modulates integrin activation by competing with talin for the same binding site on ITGB3. The sequence is that of Docking protein 1 (Dok1) from Mus musculus (Mouse).